Consider the following 252-residue polypeptide: 2-succinyl-6-hydroxy-2,4-cyclohexadiene-1-carboxylate synthase (252 aa).

It belongs to the AB hydrolase superfamily. MenH family. As to quaternary structure, monomer.

It catalyses the reaction 5-enolpyruvoyl-6-hydroxy-2-succinyl-cyclohex-3-ene-1-carboxylate = (1R,6R)-6-hydroxy-2-succinyl-cyclohexa-2,4-diene-1-carboxylate + pyruvate. Its pathway is quinol/quinone metabolism; 1,4-dihydroxy-2-naphthoate biosynthesis; 1,4-dihydroxy-2-naphthoate from chorismate: step 3/7. It functions in the pathway quinol/quinone metabolism; menaquinone biosynthesis. Catalyzes a proton abstraction reaction that results in 2,5-elimination of pyruvate from 2-succinyl-5-enolpyruvyl-6-hydroxy-3-cyclohexene-1-carboxylate (SEPHCHC) and the formation of 2-succinyl-6-hydroxy-2,4-cyclohexadiene-1-carboxylate (SHCHC). This chain is 2-succinyl-6-hydroxy-2,4-cyclohexadiene-1-carboxylate synthase, found in Salmonella typhimurium (strain LT2 / SGSC1412 / ATCC 700720).